Reading from the N-terminus, the 168-residue chain is Large ribosomal subunit protein uL10 (168 aa).

Belongs to the universal ribosomal protein uL10 family. As to quaternary structure, part of the ribosomal stalk of the 50S ribosomal subunit. The N-terminus interacts with L11 and the large rRNA to form the base of the stalk. The C-terminus forms an elongated spine to which L12 dimers bind in a sequential fashion forming a multimeric L10(L12)X complex.

Its function is as follows. Forms part of the ribosomal stalk, playing a central role in the interaction of the ribosome with GTP-bound translation factors. This Paracidovorax citrulli (strain AAC00-1) (Acidovorax citrulli) protein is Large ribosomal subunit protein uL10.